Here is a 273-residue protein sequence, read N- to C-terminus: Coiled-coil domain-containing protein 3 (273 aa).

A signal peptide spans 1–21 (MPLPLLLAALCLAASPAPARA). Residue N100 is glycosylated (N-linked (GlcNAc...) asparagine). A coiled-coil region spans residues 188 to 250 (SVQKALFEEE…VNQKLNEKLG (63 aa)).

Homodimer. N-glycosylated. In terms of tissue distribution, expressed in aorta and adipose tissue. Enriched in mature adipocytes. Over-expressed in adipose tissue from either hormonally-induced or nutritionally-regulated obese mice models.

The protein resides in the secreted. Its function is as follows. Negatively regulates TNF-alpha-induced pro-inflammatory response in endothelial cells (ECs) via inhibition of TNF-alpha-induced NF-kappaB activation in ECs. Positively regulates lipid accumulation in adipose cells. The chain is Coiled-coil domain-containing protein 3 (Ccdc3) from Mus musculus (Mouse).